A 493-amino-acid chain; its full sequence is Envelope glycoprotein gp63 (493 aa).

Residues 1-22 (MGKSGLYFSLICFYTLFPSSFG) form the signal peptide. The Extracellular portion of the chain corresponds to 23–446 (NPSRCTLFIG…GLSQWAREAL (424 aa)). 2 N-linked (GlcNAc...) asparagine; by host glycosylation sites follow: Asn140 and Asn222. The CXXC signature appears at 225–228 (CMVC). 3 cysteine pairs are disulfide-bonded: Cys225–Cys228, Cys225–Cys404, and Cys396–Cys403. Asn292 is a glycosylation site (N-linked (GlcNAc...) asparagine; by host). Positions 316–336 (AVPIAIWLVSALAAGTGIAGG) are fusion peptide. 2 coiled-coil regions span residues 344-390 (ASSK…LLFW) and 400-432 (QEQC…GWGL). The segment at 379 to 395 (AQNRRGLDLLFWEQGGL) is immunosuppression. The short motif at 396–404 (CKAIQEQCC) is the CX6CC element. A glycan (N-linked (GlcNAc...) asparagine; by host) is linked at Asn407. The chain crosses the membrane as a helical span at residues 447 to 467 (QTGITLLALFLLLIVVGPCVI). Cys465 carries S-palmitoyl cysteine; by host lipidation. At 468 to 493 (RQLQTLPSRLQHRSQPYSLLNYETNL) the chain is on the cytoplasmic side.

As to quaternary structure, the mature envelope protein (Env) consists of a trimer of SU-TM heterodimers attached by a labile interchain disulfide bond. In terms of processing, specific enzymatic cleavages in vivo yield mature proteins. Envelope glycoproteins are synthesized as an inactive precursor that is N-glycosylated and processed likely by host cell furin or by a furin-like protease in the Golgi to yield the mature SU and TM proteins. The cleavage site between SU and TM requires the minimal sequence [KR]-X-[KR]-R. Post-translationally, the CXXC motif is highly conserved across a broad range of retroviral envelope proteins. It is thought to participate in the formation of a labile disulfide bond possibly with the CX6CC motif present in the transmembrane protein. Isomerization of the intersubunit disulfide bond to an SU intrachain disulfide bond is thought to occur upon receptor recognition in order to allow membrane fusion. The transmembrane protein is palmitoylated.

Its subcellular location is the virion membrane. It is found in the host cell membrane. Its function is as follows. The surface protein (SU) attaches the virus to the host cell by binding to its receptor. This interaction triggers the refolding of the transmembrane protein (TM) and is thought to activate its fusogenic potential by unmasking its fusion peptide. Fusion occurs at the host cell plasma membrane. The transmembrane protein (TM) acts as a class I viral fusion protein. Under the current model, the protein has at least 3 conformational states: pre-fusion native state, pre-hairpin intermediate state, and post-fusion hairpin state. During viral and target cell membrane fusion, the coiled coil regions (heptad repeats) assume a trimer-of-hairpins structure, positioning the fusion peptide in close proximity to the C-terminal region of the ectodomain. The formation of this structure appears to drive apposition and subsequent fusion of viral and target cell membranes. Membranes fusion leads to delivery of the nucleocapsid into the cytoplasm. This is Envelope glycoprotein gp63 (env) from Human T-cell leukemia virus 3 (strain Pyl43) (HTLV-3).